Here is a 625-residue protein sequence, read N- to C-terminus: TORTIFOLIA1-like protein 4 (625 aa).

A disordered region spans residues 1–34 (MSVHGRFPASPPISLSPSSSSTSPSSQSPSTPPD). The span at 12–29 (PISLSPSSSSTSPSSQSP) shows a compositional bias: low complexity. 5 HEAT repeats span residues 69–106 (DSFS…YHGD), 110–147 (PHLA…HVTR), 149–186 (PFAS…AATD), 190–227 (EQLR…AGGA), and 230–268 (KPVL…AEDL). Residues 391–466 (SVDNKGPHFT…VKNCKDDVEE (76 aa)) are disordered. Basic and acidic residues-rich tracts occupy residues 404–413 (KSSEETEEKA), 420–434 (IIKH…EDSK), and 455–466 (DSVKNCKDDVEE). Residue Ser-475 is modified to Phosphoserine. The segment at 582–625 (GMRESTDTNNGQRGGSVFQKRSRRDQFQDCMHTTLQKPTTRLST) is disordered. Over residues 612–625 (MHTTLQKPTTRLST) the composition is skewed to polar residues.

The protein is TORTIFOLIA1-like protein 4 of Arabidopsis thaliana (Mouse-ear cress).